The following is a 75-amino-acid chain: UPF0346 protein LSL_0716 (75 aa).

It belongs to the UPF0346 family.

The sequence is that of UPF0346 protein LSL_0716 from Ligilactobacillus salivarius (strain UCC118) (Lactobacillus salivarius).